The primary structure comprises 203 residues: Outer-membrane lipoprotein LolB (203 aa).

The first 21 residues, 1–21 (MTGRWSPRLLAGLLAALVLSG), serve as a signal peptide directing secretion. C22 is lipidated: N-palmitoyl cysteine. C22 is lipidated: S-diacylglycerol cysteine.

This sequence belongs to the LolB family. Monomer.

The protein localises to the cell outer membrane. In terms of biological role, plays a critical role in the incorporation of lipoproteins in the outer membrane after they are released by the LolA protein. This is Outer-membrane lipoprotein LolB from Halorhodospira halophila (strain DSM 244 / SL1) (Ectothiorhodospira halophila (strain DSM 244 / SL1)).